The chain runs to 125 residues: Oxytocin-neurophysin 1 (125 aa).

The N-terminal stretch at Met1–Ala19 is a signal peptide. Cys20 and Cys25 are joined by a disulfide. Residue Gly28 is modified to Glycine amide. 7 disulfide bridges follow: Cys41–Cys85, Cys44–Cys58, Cys52–Cys75, Cys59–Cys65, Cys92–Cys104, Cys98–Cys116, and Cys105–Cys110.

Belongs to the vasopressin/oxytocin family. Interacts with oxytocin receptor (Ki=1.5 nM). Interacts with vasopressin V1aR/AVPR1A (Ki=37 nM), V1bR/AVPR1B (Ki=222 nM) and V2R/AVPR2 receptors (Ki=823 nM).

It localises to the secreted. Functionally, neurophysin 1 specifically binds oxytocin. Oxytocin causes contraction of the smooth muscle of the uterus and of the mammary gland. Acts by binding to oxytocin receptor (OXTR). This Homo sapiens (Human) protein is Oxytocin-neurophysin 1 (OXT).